Here is a 207-residue protein sequence, read N- to C-terminus: Succinyl-CoA:3-ketoacid coenzyme A transferase subunit B (207 aa).

E43 is a catalytic residue.

Belongs to the 3-oxoacid CoA-transferase subunit B family. As to quaternary structure, heterodimer of a subunit A and a subunit B.

It catalyses the reaction a 3-oxo acid + succinyl-CoA = a 3-oxoacyl-CoA + succinate. The polypeptide is Succinyl-CoA:3-ketoacid coenzyme A transferase subunit B (scoB) (Helicobacter pylori (strain J99 / ATCC 700824) (Campylobacter pylori J99)).